The primary structure comprises 393 residues: NAD(P)H-quinone oxidoreductase subunit H, chloroplastic (393 aa).

This sequence belongs to the complex I 49 kDa subunit family. In terms of assembly, NDH is composed of at least 16 different subunits, 5 of which are encoded in the nucleus.

The protein resides in the plastid. The protein localises to the chloroplast thylakoid membrane. It catalyses the reaction a plastoquinone + NADH + (n+1) H(+)(in) = a plastoquinol + NAD(+) + n H(+)(out). The catalysed reaction is a plastoquinone + NADPH + (n+1) H(+)(in) = a plastoquinol + NADP(+) + n H(+)(out). In terms of biological role, NDH shuttles electrons from NAD(P)H:plastoquinone, via FMN and iron-sulfur (Fe-S) centers, to quinones in the photosynthetic chain and possibly in a chloroplast respiratory chain. The immediate electron acceptor for the enzyme in this species is believed to be plastoquinone. Couples the redox reaction to proton translocation, and thus conserves the redox energy in a proton gradient. This is NAD(P)H-quinone oxidoreductase subunit H, chloroplastic from Saccharum hybrid (Sugarcane).